Here is a 483-residue protein sequence, read N- to C-terminus: Beta-glucosidase 4 (483 aa).

A beta-D-glucoside-binding positions include glutamine 29, histidine 131, 176–177 (NE), tyrosine 310, and glutamate 380. Catalysis depends on glutamate 177, which acts as the Proton donor. Residue glutamate 380 is the Nucleophile of the active site. Residue asparagine 398 is glycosylated (N-linked (GlcNAc...) asparagine). Residues tryptophan 429, 436–437 (EW), and phenylalanine 445 contribute to the a beta-D-glucoside site.

This sequence belongs to the glycosyl hydrolase 1 family.

The catalysed reaction is Hydrolysis of terminal, non-reducing beta-D-glucosyl residues with release of beta-D-glucose.. The protein is Beta-glucosidase 4 (BGLU4) of Oryza sativa subsp. japonica (Rice).